The chain runs to 438 residues: Serine carboxypeptidase-like 5 (438 aa).

An N-terminal signal peptide occupies residues 1–28; sequence MANYISSVLKSLLLLLHLVFLIQQHVDS. Cystine bridges form between Cys87/Cys328, Cys251/Cys263, and Cys287/Cys294. Residue Asn108 is glycosylated (N-linked (GlcNAc...) asparagine). Ser183 is a catalytic residue. N-linked (GlcNAc...) asparagine glycosylation occurs at Asn347. Asp363 is a catalytic residue. N-linked (GlcNAc...) asparagine glycosylation is present at Asn379. The active site involves His416.

It belongs to the peptidase S10 family. Expressed in seedlings, roots, and siliques.

It localises to the secreted. Its function is as follows. Probable carboxypeptidase. This is Serine carboxypeptidase-like 5 (SCPL5) from Arabidopsis thaliana (Mouse-ear cress).